Consider the following 434-residue polypeptide: Progestin and adipoQ receptor-like protein 1 (434 aa).

The Cytoplasmic portion of the chain corresponds to 1–201 (MNPDEVNRAL…KSIWSLHTET (201 aa)). Disordered stretches follow at residues 74 to 103 (LPQQEGHRSRATSFAGRIRAGSDDEAMPKH) and 118 to 137 (EINLQGTPDKRKDDEDELEV). A helical membrane pass occupies residues 202–222 (GNIWTHLIGCVAFFFLACWFL). The Extracellular portion of the chain corresponds to 223–234 (TRPDNHIQFQEK). The helical transmembrane segment at 235–255 (VVFSFFFAGAVLCLGLSFAFH) threads the bilayer. At 256–273 (TLSCHSVNVVKIFCKLDY) the chain is on the cytoplasmic side. The helical transmembrane segment at 274-294 (MGISLLIIGSFIPWIYYGFYC) threads the bilayer. At 295–299 (RREPK) the chain is on the extracellular side. Residues 300–320 (ITYIAMVSVLGIGAIVVSLWD) traverse the membrane as a helical segment. Residues 321 to 331 (KFSESRFRPIR) lie on the Cytoplasmic side of the membrane. The chain crosses the membrane as a helical span at residues 332 to 352 (AAVFVGMGCSGVIPTIHYIIT). At 353–362 (DGVHSLFADN) the chain is on the extracellular side. The helical transmembrane segment at 363 to 383 (SFHWLLLMAFLYLLGAGLYAT) threads the bilayer. Residues 384–403 (RTPERFFPGKCDIWFQSHQL) lie on the Cytoplasmic side of the membrane. Residues 404-424 (FHTCVVIAAFVHYYGISEMAF) traverse the membrane as a helical segment. The Extracellular segment spans residues 425–434 (ARLNEQCPVR).

This sequence belongs to the ADIPOR family.

It is found in the membrane. Probable receptor, which may be involved in metabolic pathways that regulate lipid metabolism such as fatty acid oxidation. In Caenorhabditis elegans, this protein is Progestin and adipoQ receptor-like protein 1 (paqr-1).